A 566-amino-acid chain; its full sequence is SRSF protein kinase 3 (566 aa).

The segment covering 1–13 (MSASTGGGGGGDS) has biased composition (gly residues). The segment at 1–60 (MSASTGGGGGGDSGSSSSSSSQASCGPEPSGSELAPPTPAPRMLQGLLGSDDEEQEDPKD) is disordered. Over residues 14–26 (GSSSSSSSQASCG) the composition is skewed to low complexity. A Phosphoserine modification is found at Ser-50. A Protein kinase domain is found at 79 to 564 (YHVVRKLGWG…AADCLQHPWL (486 aa)). ATP contacts are provided by residues 85-93 (LGWGHFSTV) and Lys-108. The Proton acceptor role is filled by Asp-212. Polar residues predominate over residues 236-254 (EWQQSGAPPPSRSTVSTAP). Disordered regions lie at residues 236–283 (EWQQ…LLEE) and 295–353 (EAAA…SGFS). The segment covering 263–278 (SKNKRKKMRRKRKQQK) has biased composition (basic residues). A Phosphoserine modification is found at Ser-329. A compositionally biased stretch (low complexity) spans 330 to 339 (PASSSPAPGG). The segment covering 344-353 (SPGSQTSGFS) has biased composition (polar residues).

Belongs to the protein kinase superfamily. Highly expressed in skeletal muscle, heart, uterus and parorchis. Weakly expressed in brain, stomach, small intestine and ovary.

The protein resides in the nucleus. Its subcellular location is the cytoplasm. It carries out the reaction L-seryl-[protein] + ATP = O-phospho-L-seryl-[protein] + ADP + H(+). The enzyme catalyses L-threonyl-[protein] + ATP = O-phospho-L-threonyl-[protein] + ADP + H(+). In terms of biological role, serine/arginine-rich protein-specific kinase which specifically phosphorylates its substrates at serine residues located in regions rich in arginine/serine dipeptides, known as RS domains. Phosphorylates the SR splicing factor SRSF1 and the lamin-B receptor (LBR) in vitro. Required for normal muscle development. The polypeptide is SRSF protein kinase 3 (SRPK3) (Sus scrofa (Pig)).